We begin with the raw amino-acid sequence, 439 residues long: Cytochrome b-c1 complex reductase subunit, mitochondrial (439 aa).

A mitochondrion-targeting transit peptide spans 1-17 (MIRGSSALKSLTSRRLY).

This sequence belongs to the peptidase M16 family. UQCRC1/QCR1 subfamily. Component of the ubiquinol-cytochrome c oxidoreductase (cytochrome b-c1 complex, complex III, CIII), a multisubunit enzyme composed of 10 subunits. The complex is composed of 3 respiratory subunits cytochrome b (COB), cytochrome c1 (CYT1) and Rieske protein (RIP1), 2 core protein subunits COR1 and QCR2, and 5 low-molecular weight protein subunits QCR6, QCR7, QCR8, QCR9 and QCR10. The complex exists as an obligatory dimer and forms supercomplexes (SCs) in the inner mitochondrial membrane with a monomer or a dimer of cytochrome c oxidase (complex IV, CIV), resulting in 2 different assemblies (supercomplexes III(2)IV and III(2)IV(2)).

The protein localises to the mitochondrion inner membrane. Component of the ubiquinol-cytochrome c oxidoreductase, a multisubunit transmembrane complex that is part of the mitochondrial electron transport chain which drives oxidative phosphorylation. The complex plays an important role in the uptake of multiple carbon sources present in different host niches. The protein is Cytochrome b-c1 complex reductase subunit, mitochondrial of Candida albicans (strain SC5314 / ATCC MYA-2876) (Yeast).